A 455-amino-acid chain; its full sequence is Phosphomethylpyrimidine synthase (455 aa).

Residues Asn-80, Met-109, Tyr-139, His-175, 195 to 197 (SRG), 236 to 239 (DALR), and Glu-275 contribute to the substrate site. Residue His-279 participates in Zn(2+) binding. Residue Tyr-302 participates in substrate binding. Zn(2+) is bound at residue His-343. Cys-423, Cys-426, and Cys-431 together coordinate [4Fe-4S] cluster.

Belongs to the ThiC family. The cofactor is [4Fe-4S] cluster.

It carries out the reaction 5-amino-1-(5-phospho-beta-D-ribosyl)imidazole + S-adenosyl-L-methionine = 4-amino-2-methyl-5-(phosphooxymethyl)pyrimidine + CO + 5'-deoxyadenosine + formate + L-methionine + 3 H(+). Its pathway is cofactor biosynthesis; thiamine diphosphate biosynthesis. Functionally, catalyzes the synthesis of the hydroxymethylpyrimidine phosphate (HMP-P) moiety of thiamine from aminoimidazole ribotide (AIR) in a radical S-adenosyl-L-methionine (SAM)-dependent reaction. The chain is Phosphomethylpyrimidine synthase from Synechococcus sp. (strain JA-3-3Ab) (Cyanobacteria bacterium Yellowstone A-Prime).